A 465-amino-acid chain; its full sequence is SHC-transforming protein 1 (465 aa).

A PID domain is found at 44–227 (MGPGVPYLVR…AGFDGSAWDE (184 aa)). The interval 228–369 (EEEELPDHAY…SMEDQLKREP (142 aa)) is CH1. Residues 281–315 (VSGAEQDSRKMQPTLQGRERFPVPCSRPPNRPDLF) are disordered. Positions 370-461 (WYQGKMSRKE…GSELCLQQPV (92 aa)) constitute an SH2 domain.

Interacts with grb2. In terms of tissue distribution, highly expressed in oocytes and embryo. Also expressed in liver. Detected in ovary, testis and heart and to a lesser extent in liver (at protein level).

It localises to the cytoplasm. Its function is as follows. Implicated in ras-dependent oocyte maturation induced by insulin/IGF1. This Xenopus laevis (African clawed frog) protein is SHC-transforming protein 1 (shc1).